The chain runs to 348 residues: MPSAIPMLYLPDTMSAWPWQRAINPYFNEVKAASNSWFKSFRAFSPASQKAFDKCDFCLLAALAYPRARKEHLRTGCDLMNLFFVIDEYTDVEDANVCRDMVDIVIDALRRPHDPRPEGEVVLGEIARQFWARAIETASPTSQRRFLETFIAYLESVVLQAADRDCDAEHTVQTYLAQRRDNIGSYPSYAVLELALDIPDDVFYHPAMNELSLYATEMLIIDNDLVSYNREQASGDTNNILFVIMRQFNCSLDHAMAWAAAYHSQLEARFMDAFKRMPSWGLEIDSQVEEYCQGIANWPRGNDCWSFESGRYFGDKGREVQKTRCVPLLPKKERDTSLRQQDVVITSL.

Residues D87, N223, S227, and E231 each coordinate Mg(2+). The DDXXD motif motif lies at 87–91 (DEYTD). An NSE/DTE motif motif is present at residues 223–231 (NDLVSYNRE). (2E,6E)-farnesyl diphosphate-binding residues include R311 and Y312.

It belongs to the terpene synthase family. Requires Mg(2+) as cofactor.

The catalysed reaction is (2E,6E)-farnesyl diphosphate = Delta(6)-protoilludene + diphosphate. Its function is as follows. Terpene cyclase that catalyzes the cyclization of farnesyl diphosphate (FPP) to delta(6)-protoilludene. This Postia placenta (strain ATCC 44394 / Madison 698-R) (Brown rot fungus) protein is Delta(6)-protoilludene synthase 18.